The following is a 295-amino-acid chain: bZIP transcription factor 60 (295 aa).

A disordered region spans residues 101–154; sequence PAAADDSGKENSDLVVEKKSNDSGSEIHDDDDEEGDDDAVAKKRRRRVRNRDAA. Residues 106-127 are compositionally biased toward basic and acidic residues; that stretch reads DSGKENSDLVVEKKSNDSGSEI. Over residues 128 to 138 the composition is skewed to acidic residues; that stretch reads HDDDDEEGDDD. The region spanning 140–203 is the bZIP domain; sequence VAKKRRRRVR…QSLRYCLQKG (64 aa). Residues 142-162 form a basic motif region; that stretch reads KKRRRRVRNRDAAVRSRERKK. The leucine-zipper stretch occupies residues 168-182; it reads LEKKSKYLERECLRL. Residues 224–244 form a helical membrane-spanning segment; the sequence is LLLGSLLWLLGVNFICLFPYM.

It belongs to the bZIP family. As to quaternary structure, interacts with BZIP28. In terms of tissue distribution, expressed in seedlings, rosette and cauline leaves, stems, buds, flowers, siliques, immature seeds, anthers and pollen grains.

It is found in the endoplasmic reticulum membrane. It localises to the nucleus. In terms of biological role, transcription factor involved in the unfolded protein response (UPR). Acts during endoplasmic reticulum stress (ER) by activating unfolded protein response (UPR) target genes via direct binding to the UPR element (UPRE). Plays a role in plant immunity and abiotic stress responses. In Arabidopsis thaliana (Mouse-ear cress), this protein is bZIP transcription factor 60.